Here is a 329-residue protein sequence, read N- to C-terminus: Zygote arrest protein 1 (329 aa).

2 disordered regions span residues 106–132 (LRRR…RTQA) and 146–218 (FREE…DDLK). A compositionally biased stretch (acidic residues) spans 149-162 (EGEEEEDTDLEVTE). The segment covering 166 to 177 (SAEKLESAEKNV) has biased composition (basic and acidic residues). The 3CxxC-type zinc-finger motif lies at 231 to 314 (KYGFYHCKDC…RQDLCGRCKG (84 aa)).

It belongs to the ZAR1 family. Specifically expressed in ovaries but absent in testes.

It is found in the cytoplasm. It localises to the cytoplasmic ribonucleoprotein granule. Its function is as follows. mRNA-binding protein required for maternal mRNA storage, translation and degradation during oocyte maturation. Probably promotes formation of some phase-separated membraneless compartment that stores maternal mRNAs in oocytes: acts by undergoing liquid-liquid phase separation upon binding to maternal mRNAs. Binds to the 3'-UTR of zona pellucida mRNAs, inhibiting their translation. The chain is Zygote arrest protein 1 from Danio rerio (Zebrafish).